Here is a 122-residue protein sequence, read N- to C-terminus: Large ribosomal subunit protein uL14 (122 aa).

The protein belongs to the universal ribosomal protein uL14 family. Part of the 50S ribosomal subunit. Forms a cluster with proteins L3 and L19. In the 70S ribosome, L14 and L19 interact and together make contacts with the 16S rRNA in bridges B5 and B8.

Its function is as follows. Binds to 23S rRNA. Forms part of two intersubunit bridges in the 70S ribosome. The protein is Large ribosomal subunit protein uL14 of Corynebacterium efficiens (strain DSM 44549 / YS-314 / AJ 12310 / JCM 11189 / NBRC 100395).